We begin with the raw amino-acid sequence, 185 residues long: Pyridoxal 5'-phosphate synthase subunit PdxT (185 aa).

An L-glutamine-binding site is contributed by 46–48 (GES). The active-site Nucleophile is Cys78. L-glutamine-binding positions include Arg106 and 132–133 (IR). Active-site charge relay system residues include His168 and Glu170.

The protein belongs to the glutaminase PdxT/SNO family. In terms of assembly, in the presence of PdxS, forms a dodecamer of heterodimers. Only shows activity in the heterodimer.

The catalysed reaction is aldehydo-D-ribose 5-phosphate + D-glyceraldehyde 3-phosphate + L-glutamine = pyridoxal 5'-phosphate + L-glutamate + phosphate + 3 H2O + H(+). The enzyme catalyses L-glutamine + H2O = L-glutamate + NH4(+). It functions in the pathway cofactor biosynthesis; pyridoxal 5'-phosphate biosynthesis. In terms of biological role, catalyzes the hydrolysis of glutamine to glutamate and ammonia as part of the biosynthesis of pyridoxal 5'-phosphate. The resulting ammonia molecule is channeled to the active site of PdxS. In Corynebacterium diphtheriae (strain ATCC 700971 / NCTC 13129 / Biotype gravis), this protein is Pyridoxal 5'-phosphate synthase subunit PdxT.